The following is a 395-amino-acid chain: Phosphoglycerate kinase (395 aa).

Residues 20–22 (DFN), arginine 36, 59–62 (HLGR), arginine 120, and arginine 157 each bind substrate. Residues lysine 208, glycine 296, glutamate 327, and 353–356 (GGDT) contribute to the ATP site.

It belongs to the phosphoglycerate kinase family. As to quaternary structure, monomer.

It is found in the cytoplasm. The catalysed reaction is (2R)-3-phosphoglycerate + ATP = (2R)-3-phospho-glyceroyl phosphate + ADP. Its pathway is carbohydrate degradation; glycolysis; pyruvate from D-glyceraldehyde 3-phosphate: step 2/5. This Tropheryma whipplei (strain Twist) (Whipple's bacillus) protein is Phosphoglycerate kinase.